Here is a 491-residue protein sequence, read N- to C-terminus: Probable CtpA-like serine protease (491 aa).

The segment at 1 to 22 (MNDHQKNHATSQDDNTKSTPSK) is disordered. A compositionally biased stretch (polar residues) spans 8 to 22 (HATSQDDNTKSTPSK). Residues 31–51 (LWHFILVILGIILLTSIITVV) traverse the membrane as a helical segment. Positions 119 to 201 (TKQFNEGVSG…TYVTLTIKRG (83 aa)) constitute a PDZ domain. Residues Ser324, Asp335, and Lys349 each act as charge relay system in the active site.

The protein belongs to the peptidase S41A family.

Its subcellular location is the cell membrane. This chain is Probable CtpA-like serine protease, found in Staphylococcus epidermidis (strain ATCC 35984 / DSM 28319 / BCRC 17069 / CCUG 31568 / BM 3577 / RP62A).